Here is a 62-residue protein sequence, read N- to C-terminus: Photosystem II reaction center protein Z (62 aa).

Transmembrane regions (helical) follow at residues 8–28 and 41–61; these read TLLA…VLLA and FSGS…NSFV.

It belongs to the PsbZ family. In terms of assembly, PSII is composed of 1 copy each of membrane proteins PsbA, PsbB, PsbC, PsbD, PsbE, PsbF, PsbH, PsbI, PsbJ, PsbK, PsbL, PsbM, PsbT, PsbY, PsbZ, Psb30/Ycf12, at least 3 peripheral proteins of the oxygen-evolving complex and a large number of cofactors. It forms dimeric complexes.

It localises to the plastid. The protein localises to the chloroplast thylakoid membrane. Functionally, may control the interaction of photosystem II (PSII) cores with the light-harvesting antenna, regulates electron flow through the 2 photosystem reaction centers. PSII is a light-driven water plastoquinone oxidoreductase, using light energy to abstract electrons from H(2)O, generating a proton gradient subsequently used for ATP formation. The protein is Photosystem II reaction center protein Z of Ostreococcus tauri.